Here is a 963-residue protein sequence, read N- to C-terminus: Putative RNA Helicase B962L (963 aa).

The 187-residue stretch at 43–229 (IPTSLADRVL…FGIGKENIIL (187 aa)) folds into the Helicase ATP-binding domain. 56-63 (SRTGSGKS) lines the ATP pocket. The DEAH box motif lies at 167-170 (DEAH). In terms of domain architecture, Helicase C-terminal spans 253 to 459 (ACETALTIHK…TIKKNKEGVF (207 aa)). The chain crosses the membrane as a helical span at residues 521–541 (GYFWQAAISDIATILAVVSVV).

Belongs to the DEAD box helicase family. DEAH subfamily.

Its subcellular location is the host membrane. It localises to the virion. It carries out the reaction ATP + H2O = ADP + phosphate + H(+). The sequence is that of Putative RNA Helicase B962L from Ornithodoros (relapsing fever ticks).